A 355-amino-acid polypeptide reads, in one-letter code: Butyrate kinase 1 (355 aa).

It belongs to the acetokinase family.

The protein resides in the cytoplasm. The catalysed reaction is butanoate + ATP = butanoyl phosphate + ADP. Its pathway is lipid metabolism; butanoate metabolism. Its function is as follows. Catalyzes the conversion of butyryl-CoA through butyryl phosphate to butyrate. This Clostridium acetobutylicum (strain ATCC 824 / DSM 792 / JCM 1419 / IAM 19013 / LMG 5710 / NBRC 13948 / NRRL B-527 / VKM B-1787 / 2291 / W) protein is Butyrate kinase 1 (buk1).